Reading from the N-terminus, the 1089-residue chain is Ankyrin repeat and IBR domain-containing protein 1 (1089 aa).

Residue Gly-2 is the site of N-myristoyl glycine attachment. ANK repeat units follow at residues 45-74 (QHNTPLHYAARHGMNKILGTFLGRDGNPNK) and 144-173 (KKNTPLHYAAASGMKACVELLVKHGGDLFA). The interval 281-321 (CQRSGVQMPTPPPSGYNAWDTLPSPRTPRTTRSSVTSPDEI) is disordered. Over residues 303–318 (PSPRTPRTTRSSVTSP) the composition is skewed to low complexity. The interval 329–569 (DTSLCDICMC…GGYYRCTRYE (241 aa)) is TRIAD supradomain. Positions 333, 336, 351, 353, 356, 359, 378, 383, 465, 468, 473, 478, 519, and 522 each coordinate Zn(2+). The RING-type 1 zinc-finger motif lies at 333-383 (CDICMCSISVFEDPVDMPCGHDFCRGCWESFLNLKIQEGEAHNIFCPAYDC). Residues 401–478 (DKRYLQFDIK…LGEAHEPCDC (78 aa)) form an IBR-type zinc finger. The RING-type 2; atypical zinc finger occupies 519–548 (CANCKSPIQKNEGCNHMQCAKCKYDFCWIC). The active site involves Cys-532. 6 residues coordinate Zn(2+): Cys-537, Cys-540, Cys-545, Cys-548, His-555, and Cys-565. Positions 575–640 (EEQSKEMTVE…RALKETEGGC (66 aa)) form a coiled coil. The residue at position 737 (Ser-737) is a Phosphoserine. Residues 776–821 (RRGDVHSLLSNPPDPDEPSESTLDIPEGGSSSRRPGTSVVSSASMS) form a disordered region. The 20-residue stretch at 851–870 (EDDPNILLAIQLSLQESGLA) folds into the UIM domain. A phosphoserine mark is found at Ser-884 and Ser-911. 3 disordered regions span residues 889 to 912 (GTSLPSRLDSVPRNTDSPRAALSS), 927 to 964 (AENDPFSTDTLSSHPLSEARSDFCPSSSDPDSAGQDPN), and 1026 to 1089 (DASV…VHLV). 2 stretches are compositionally biased toward polar residues: residues 931 to 941 (PFSTDTLSSHP) and 1070 to 1082 (DVSSQTPQTSSDW).

This sequence belongs to the RBR family.

It carries out the reaction [E2 ubiquitin-conjugating enzyme]-S-ubiquitinyl-L-cysteine + [acceptor protein]-L-lysine = [E2 ubiquitin-conjugating enzyme]-L-cysteine + [acceptor protein]-N(6)-ubiquitinyl-L-lysine.. Functionally, might act as an E3 ubiquitin-protein ligase, or as part of E3 complex, which accepts ubiquitin from specific E2 ubiquitin-conjugating enzymes and then transfers it to substrates. This chain is Ankyrin repeat and IBR domain-containing protein 1 (ANKIB1), found in Homo sapiens (Human).